Consider the following 440-residue polypeptide: Signal recognition particle 54 kDa protein (440 aa).

Residues 104–111 (GLQGSGKT), 184–188 (DTAGR), and 242–245 (TKLD) contribute to the GTP site.

This sequence belongs to the GTP-binding SRP family. SRP54 subfamily. As to quaternary structure, part of the signal recognition particle protein translocation system, which is composed of SRP and FtsY. Archaeal SRP consists of a 7S RNA molecule of 300 nucleotides and two protein subunits: SRP54 and SRP19.

It is found in the cytoplasm. It catalyses the reaction GTP + H2O = GDP + phosphate + H(+). Involved in targeting and insertion of nascent membrane proteins into the cytoplasmic membrane. Binds to the hydrophobic signal sequence of the ribosome-nascent chain (RNC) as it emerges from the ribosomes. The SRP-RNC complex is then targeted to the cytoplasmic membrane where it interacts with the SRP receptor FtsY. This Methanosarcina acetivorans (strain ATCC 35395 / DSM 2834 / JCM 12185 / C2A) protein is Signal recognition particle 54 kDa protein.